A 375-amino-acid polypeptide reads, in one-letter code: Nicotinate-nucleotide--dimethylbenzimidazole phosphoribosyltransferase (375 aa).

Glutamate 323 (proton acceptor) is an active-site residue. Positions 344-375 are disordered; the sequence is LPEKPEELEAGEGPEAAEESSPEPENPEALAE. A compositionally biased stretch (acidic residues) spans 351 to 375; sequence LEAGEGPEAAEESSPEPENPEALAE.

It belongs to the CobT family.

It catalyses the reaction 5,6-dimethylbenzimidazole + nicotinate beta-D-ribonucleotide = alpha-ribazole 5'-phosphate + nicotinate + H(+). Its pathway is nucleoside biosynthesis; alpha-ribazole biosynthesis; alpha-ribazole from 5,6-dimethylbenzimidazole: step 1/2. Catalyzes the synthesis of alpha-ribazole-5'-phosphate from nicotinate mononucleotide (NAMN) and 5,6-dimethylbenzimidazole (DMB). The chain is Nicotinate-nucleotide--dimethylbenzimidazole phosphoribosyltransferase from Streptomyces avermitilis (strain ATCC 31267 / DSM 46492 / JCM 5070 / NBRC 14893 / NCIMB 12804 / NRRL 8165 / MA-4680).